Reading from the N-terminus, the 512-residue chain is Transmembrane protein 102 (512 aa).

Topologically, residues 1-267 (MASAVWGNAP…EAWPTLCPAQ (267 aa)) are extracellular. Residues 168 to 258 (PVPGGRDWIH…PGPQPSEARE (91 aa)) are disordered. Composition is skewed to basic and acidic residues over residues 174-186 (DWIH…EGPR) and 195-209 (PHSD…ESLE). Residues 210–226 (KSPSNVSVPESPQQNLT) are compositionally biased toward polar residues. The helical transmembrane segment at 268-284 (VAAWFFASLAAVAESLF) threads the bilayer. Residues 285-512 (PVPGAPRLVH…GLAGVGAGSH (228 aa)) lie on the Cytoplasmic side of the membrane.

Interacts with CSF2RB; this interaction occurs preferentially in the absence of CSF2.

It localises to the cell membrane. Functionally, selectively involved in CSF2 deprivation-induced apoptosis via a mitochondria-dependent pathway. The chain is Transmembrane protein 102 (TMEM102) from Bos taurus (Bovine).